The primary structure comprises 31 residues: Alcohol dehydrogenase 1 (31 aa).

Cysteine 7 lines the Zn(2+) pocket.

The protein belongs to the zinc-containing alcohol dehydrogenase family. Class-P subfamily. As to quaternary structure, homodimer. It depends on Zn(2+) as a cofactor.

The protein resides in the cytoplasm. The enzyme catalyses a primary alcohol + NAD(+) = an aldehyde + NADH + H(+). It carries out the reaction a secondary alcohol + NAD(+) = a ketone + NADH + H(+). The sequence is that of Alcohol dehydrogenase 1 from Catharanthus roseus (Madagascar periwinkle).